A 122-amino-acid polypeptide reads, in one-letter code: Antitoxin protein TsiV3 (122 aa).

An N-terminal signal peptide occupies residues 1-24 (MNNLLSAYVTMLLILLSISGGAIA). Cystine bridges form between Cys28–Cys41 and Cys82–Cys100.

In terms of assembly, homodimer; dimerization is critical for inhibitory activity. Forms a heterotetramer with VgrG3 composed of one TsiV3 homodimer and two VgrG3 molecules.

In terms of biological role, immunity protein that plays a role in preventing early activation of toxin VgrG3. The chain is Antitoxin protein TsiV3 from Vibrio cholerae serotype O1 (strain ATCC 39315 / El Tor Inaba N16961).